A 528-amino-acid chain; its full sequence is Peptide chain release factor 3 (528 aa).

The tr-type G domain maps to Ala-10–Met-279. Residues Ser-19 to Thr-26, Asp-87 to His-91, and Asn-141 to Asp-144 each bind GTP.

The protein belongs to the TRAFAC class translation factor GTPase superfamily. Classic translation factor GTPase family. PrfC subfamily.

It localises to the cytoplasm. Its function is as follows. Increases the formation of ribosomal termination complexes and stimulates activities of RF-1 and RF-2. It binds guanine nucleotides and has strong preference for UGA stop codons. It may interact directly with the ribosome. The stimulation of RF-1 and RF-2 is significantly reduced by GTP and GDP, but not by GMP. The chain is Peptide chain release factor 3 from Escherichia coli O1:K1 / APEC.